The chain runs to 938 residues: MSDYKKTLQLPETKFPMKANLTQREPEMLRKWEKDDAYGAMVRASGQQGTYVLHDGPPYANGNIHMGHALNKILKDIIVKSRNLQGFKAEYVPGWDCHGLPIELKVEHELGEKKRTMPAHAVRKRCRQYAEKYLDIQRKEFKRLGVFGAWDKPYVTMHPSYEAATARELGNFAAKGGLVRSKKPIYWCCSCQTALAEAEVEYHDHTSPSVHVRFPLRDPRVAEVLPGVDPAHAYIVIWTTTPWTLPDNMAVAVHPDFDYVVVRHGGDFHIVAEGLLEACLKAFKWDEHEVVARIGGRALEGLKATHPFYDRPSPIVLADYVTLESGTGCVHTAPGHGREDYETGLRYGLDIYSPLTDEGRYLDCVEFFAGMTIFEANPKVIEKLREVGNLLAEGRITHSYPHCWRCKKPVIFRATTQWFIAMERNDLRQKALDAIRDDVRWIPSWGQERIHNMIEFRPDWCISRQRMWGVPIVALLCEDCGEAWNDADWMRDIAERFAKHATGCDYWYETDLSDIVPAGLRCPKCGGDHWKKETDILDVWFDSGTSFAAVVEQREECGFPADLYLEGSDQHRGWFHSSLLASIGTRGVPPYRSVLTHGYVVDGDGRKMSKSVGNVVAPQEIIDKHGAEVLRLWVASVDYREDIRISEEILNRLVDAYRRIRNTCRYLLGNISDLTPETMVPFEAMDPLDRFALDLASRAHERIQDAYTEYEFHKVFHTLHNLCVTDLSAFYLDILKDRLYSSAADSHARRSAQTALYRILMLMVRDMAPVLSFTAEEVFGYVPAALRPDVISVFALPATDAPAFTLDTTSRAAWEKLLAVRSETTKAIEPLRKSGEVGHSLDTHVTLFADPSLKATLEGLGSDLRAMFIVSRLEVMDLADAPADAWTSEELPELKVTVRKAEGEKCERCWIISADLGTDAAHPTLCPRCTAVLTGTGA.

Positions 58 to 68 match the 'HIGH' region motif; it reads PYANGNIHMGH. E566 provides a ligand contact to L-isoleucyl-5'-AMP. Residues 607 to 611 carry the 'KMSKS' region motif; sequence KMSKS. K610 is a binding site for ATP. Residues C906, C909, C926, and C929 each contribute to the Zn(2+) site.

Belongs to the class-I aminoacyl-tRNA synthetase family. IleS type 1 subfamily. In terms of assembly, monomer. Zn(2+) is required as a cofactor.

The protein localises to the cytoplasm. It catalyses the reaction tRNA(Ile) + L-isoleucine + ATP = L-isoleucyl-tRNA(Ile) + AMP + diphosphate. Catalyzes the attachment of isoleucine to tRNA(Ile). As IleRS can inadvertently accommodate and process structurally similar amino acids such as valine, to avoid such errors it has two additional distinct tRNA(Ile)-dependent editing activities. One activity is designated as 'pretransfer' editing and involves the hydrolysis of activated Val-AMP. The other activity is designated 'posttransfer' editing and involves deacylation of mischarged Val-tRNA(Ile). This Nitratidesulfovibrio vulgaris (strain ATCC 29579 / DSM 644 / CCUG 34227 / NCIMB 8303 / VKM B-1760 / Hildenborough) (Desulfovibrio vulgaris) protein is Isoleucine--tRNA ligase.